Reading from the N-terminus, the 343-residue chain is Peptide methionine sulfoxide reductase msrA/msrB (343 aa).

Residues 21–174 are peptide methionine sulfoxide reductase A; it reads KVIYLAGGCF…PNGYCHIDLK (154 aa). Catalysis depends on Cys29, which acts as the Cysteine sulfenic acid (-SOH) intermediate. In terms of domain architecture, MsrB spans 191-314; that stretch reads DEVLKKKLTQ…NSASLRFIPL (124 aa). Catalysis depends on Cys303, which acts as the Nucleophile.

In the N-terminal section; belongs to the MsrA Met sulfoxide reductase family. This sequence in the C-terminal section; belongs to the MsrB Met sulfoxide reductase family.

It carries out the reaction L-methionyl-[protein] + [thioredoxin]-disulfide + H2O = L-methionyl-(S)-S-oxide-[protein] + [thioredoxin]-dithiol. It catalyses the reaction [thioredoxin]-disulfide + L-methionine + H2O = L-methionine (S)-S-oxide + [thioredoxin]-dithiol. The catalysed reaction is L-methionyl-[protein] + [thioredoxin]-disulfide + H2O = L-methionyl-(R)-S-oxide-[protein] + [thioredoxin]-dithiol. Its function is as follows. Has an important function as a repair enzyme for proteins that have been inactivated by oxidation. Catalyzes the reversible oxidation-reduction of methionine sulfoxide in proteins to methionine. The protein is Peptide methionine sulfoxide reductase msrA/msrB of Enterococcus faecalis (Streptococcus faecalis).